A 174-amino-acid polypeptide reads, in one-letter code: Putative FAS1 domain-containing protein 096L (174 aa).

One can recognise an FAS1 domain in the interval 36-171 (PDTLWSKLNE…GIIHLMEEVY (136 aa)).

The protein is Putative FAS1 domain-containing protein 096L of Acheta domesticus (House cricket).